The following is a 137-amino-acid chain: Proofreading thioesterase EntH (137 aa).

The Nucleophile or proton acceptor role is filled by E63.

This sequence belongs to the thioesterase PaaI family. Homotetramer. Dimer of dimers. Interacts specifically with the aryl carrier protein (ArCP) domain of EntB.

Its subcellular location is the cytoplasm. It participates in siderophore biosynthesis; enterobactin biosynthesis. Its function is as follows. Required for optimal enterobactin synthesis. Acts as a proofreading enzyme that prevents EntB misacylation by hydrolyzing the thioester bound existing between EntB and wrongly charged molecules. The chain is Proofreading thioesterase EntH from Citrobacter koseri (strain ATCC BAA-895 / CDC 4225-83 / SGSC4696).